We begin with the raw amino-acid sequence, 105 residues long: Large ribosomal subunit protein eL30 (105 aa).

This sequence belongs to the eukaryotic ribosomal protein eL30 family.

The chain is Large ribosomal subunit protein eL30 (RPL30) from Eremothecium gossypii (strain ATCC 10895 / CBS 109.51 / FGSC 9923 / NRRL Y-1056) (Yeast).